The following is a 389-amino-acid chain: Alkanesulfonate monooxygenase (389 aa).

It belongs to the SsuD family.

It catalyses the reaction an alkanesulfonate + FMNH2 + O2 = an aldehyde + FMN + sulfite + H2O + 2 H(+). Catalyzes the desulfonation of aliphatic sulfonates. This Variovorax paradoxus (strain S110) protein is Alkanesulfonate monooxygenase.